We begin with the raw amino-acid sequence, 325 residues long: ATP phosphoribosyltransferase (325 aa).

The protein belongs to the ATP phosphoribosyltransferase family. Long subfamily. Mg(2+) serves as cofactor.

It is found in the cytoplasm. The catalysed reaction is 1-(5-phospho-beta-D-ribosyl)-ATP + diphosphate = 5-phospho-alpha-D-ribose 1-diphosphate + ATP. Its pathway is amino-acid biosynthesis; L-histidine biosynthesis; L-histidine from 5-phospho-alpha-D-ribose 1-diphosphate: step 1/9. With respect to regulation, feedback inhibited by histidine. In terms of biological role, catalyzes the condensation of ATP and 5-phosphoribose 1-diphosphate to form N'-(5'-phosphoribosyl)-ATP (PR-ATP). Has a crucial role in the pathway because the rate of histidine biosynthesis seems to be controlled primarily by regulation of HisG enzymatic activity. In Bradyrhizobium sp. (strain ORS 278), this protein is ATP phosphoribosyltransferase.